Consider the following 116-residue polypeptide: Non-specific lipid transfer protein GPI-anchored 17 (116 aa).

The first 24 residues, 1 to 24 (MKIGVVLVLLTVFVVVMSSTSVSA), serve as a signal peptide directing secretion. Cystine bridges form between C31–C74, C42–C58, and C59–C99. A lipid anchor (GPI-anchor amidated asparagine) is attached at N107. Residues 108 to 116 (GKNFKNTSL) constitute a propeptide, removed in mature form. N113 carries N-linked (GlcNAc...) asparagine glycosylation.

Belongs to the plant LTP family. As to expression, expressed in seedlings, preferentially in roots.

The protein resides in the cell membrane. In terms of biological role, probable lipid transfer protein. The polypeptide is Non-specific lipid transfer protein GPI-anchored 17 (Arabidopsis thaliana (Mouse-ear cress)).